Here is an 82-residue protein sequence, read N- to C-terminus: UPF0291 protein LVIS_1359 (82 aa).

Belongs to the UPF0291 family.

It localises to the cytoplasm. The sequence is that of UPF0291 protein LVIS_1359 from Levilactobacillus brevis (strain ATCC 367 / BCRC 12310 / CIP 105137 / JCM 1170 / LMG 11437 / NCIMB 947 / NCTC 947) (Lactobacillus brevis).